Here is a 260-residue protein sequence, read N- to C-terminus: Indole-3-glycerol phosphate synthase (260 aa).

This sequence belongs to the TrpC family.

It catalyses the reaction 1-(2-carboxyphenylamino)-1-deoxy-D-ribulose 5-phosphate + H(+) = (1S,2R)-1-C-(indol-3-yl)glycerol 3-phosphate + CO2 + H2O. It functions in the pathway amino-acid biosynthesis; L-tryptophan biosynthesis; L-tryptophan from chorismate: step 4/5. The polypeptide is Indole-3-glycerol phosphate synthase (Staphylococcus aureus (strain COL)).